We begin with the raw amino-acid sequence, 432 residues long: 3-phosphoshikimate 1-carboxyvinyltransferase (432 aa).

Lysine 22, serine 23, and arginine 27 together coordinate 3-phosphoshikimate. Residue lysine 22 participates in phosphoenolpyruvate binding. Glycine 96 and arginine 127 together coordinate phosphoenolpyruvate. The 3-phosphoshikimate site is built by serine 173, serine 174, glutamine 175, serine 201, aspartate 316, asparagine 339, and lysine 343. Position 175 (glutamine 175) interacts with phosphoenolpyruvate. Residue aspartate 316 is the Proton acceptor of the active site. Phosphoenolpyruvate-binding residues include arginine 347, arginine 391, and lysine 416.

The protein belongs to the EPSP synthase family. As to quaternary structure, monomer.

The protein localises to the cytoplasm. It carries out the reaction 3-phosphoshikimate + phosphoenolpyruvate = 5-O-(1-carboxyvinyl)-3-phosphoshikimate + phosphate. It participates in metabolic intermediate biosynthesis; chorismate biosynthesis; chorismate from D-erythrose 4-phosphate and phosphoenolpyruvate: step 6/7. Functionally, catalyzes the transfer of the enolpyruvyl moiety of phosphoenolpyruvate (PEP) to the 5-hydroxyl of shikimate-3-phosphate (S3P) to produce enolpyruvyl shikimate-3-phosphate and inorganic phosphate. This is 3-phosphoshikimate 1-carboxyvinyltransferase from Haemophilus influenzae (strain ATCC 51907 / DSM 11121 / KW20 / Rd).